The primary structure comprises 626 residues: DNA primase (626 aa).

A CHC2-type zinc finger spans residues 39 to 63 (CPFHGEKTPSFSVSPEKQIFHCFGC). The region spanning 264-346 (EEITLMEGFM…DVFVLQLPAG (83 aa)) is the Toprim domain. 3 residues coordinate Mg(2+): Glu-270, Asp-314, and Asp-316.

Belongs to the DnaG primase family. As to quaternary structure, monomer. Interacts with DnaB. The cofactor is Zn(2+). Mg(2+) is required as a cofactor.

The catalysed reaction is ssDNA + n NTP = ssDNA/pppN(pN)n-1 hybrid + (n-1) diphosphate.. RNA polymerase that catalyzes the synthesis of short RNA molecules used as primers for DNA polymerase during DNA replication. This Listeria monocytogenes serovar 1/2a (strain ATCC BAA-679 / EGD-e) protein is DNA primase.